A 521-amino-acid chain; its full sequence is uncharacterized protein (521 aa).

Positions 14 to 41 (QFQQMQHQMQQQQQQQMQQQQQQQQQQQ) form a coiled coil. 3 stretches are compositionally biased toward low complexity: residues 238–266 (LSGSTSTTNNNNTTTTTTTTSSNNITSSS), 275–353 (SSTS…NNNN), and 423–482 (PRLS…PNNP). 2 disordered regions span residues 238–357 (LSGS…ISGF) and 413–491 (TAVA…SNNG).

This is an uncharacterized protein from Dictyostelium discoideum (Social amoeba).